A 409-amino-acid chain; its full sequence is MNDMSHAPQPAQTKPHVRLVGRVAGVADLFRSSARQTEEARRVPASHIAALRGIGYFDIVKPRAFGGQGGEFAELVEANIELSAACASTGWVAGLLSAHQWLLAMFPEEAQADVWDENPDALLCGSYAPVKMAEAADGGYRLSGKWAFASGCENAQWSLCAAILPPQAKGRPVPAFLLVPASQYAIEDTWHVVGLAGTVSKTLVLDDVFVPKHRVLTFPDATSGHTPGGRFYAQEGLFNMPLLTGIPSCLASTGVGAAKGALAAYVDHVGGRVTRGAVAGGNNRMAEFPTIQLRVAEAAASVDAACEILLRDVARAQALSQARLEGRAEFSVDDRLLSRRGQSFSVSFSLRAVQALNDSTGGVGLDLSNPVQRAWRDANAVGRHISMNWDAVGTMIGQSMLGLEPKGQY.

It belongs to the HpaH/HsaA monooxygenase family. The FADH(2)-dependent resorcinol hydroxylase is composed of two subunits, GraA (the oxygenase component) and GraD (the reductase component). Both subunits are required for activity.

The catalysed reaction is resorcinol + FADH2 + O2 = benzene-1,2,4-triol + FAD + H2O + H(+). It functions in the pathway aromatic compound metabolism. Functionally, involved in the gamma-resorcylate (2,6-dihydroxybenzoate) catabolism. Oxygenase component of the resorcinol hydroxylase, which catalyzes the FADH(2)-dependent conversion of resorcinol to hydroxyquinol. The chain is FADH(2)-dependent resorcinol hydroxylase, oxygenase component from Rhizobium sp. (strain MTP-10005).